A 447-amino-acid chain; its full sequence is Glycylpeptide N-tetradecanoyltransferase (447 aa).

Tetradecanoyl-CoA contacts are provided by residues 38–41, 171–173, and 179–183; these read YKFW, LCV, and SKRLA. Leu447 (proton acceptor; via carboxylate) is an active-site residue.

This sequence belongs to the NMT family. In terms of assembly, monomer.

The protein resides in the cytoplasm. The enzyme catalyses N-terminal glycyl-[protein] + tetradecanoyl-CoA = N-tetradecanoylglycyl-[protein] + CoA + H(+). Its function is as follows. Adds a myristoyl group to the N-terminal glycine residue of certain cellular proteins. The sequence is that of Glycylpeptide N-tetradecanoyltransferase (NMT1) from Kluyveromyces lactis (strain ATCC 8585 / CBS 2359 / DSM 70799 / NBRC 1267 / NRRL Y-1140 / WM37) (Yeast).